A 252-amino-acid polypeptide reads, in one-letter code: Ribosomal RNA small subunit methyltransferase NEP1 (252 aa).

Residues Met176, Gly209, Gly214, and 227-232 (ISNYPL) contribute to the S-adenosyl-L-methionine site.

The protein belongs to the class IV-like SAM-binding methyltransferase superfamily. RNA methyltransferase NEP1 family. Homodimer. Part of the small subunit (SSU) processome, composed of more than 70 proteins and the RNA chaperone small nucleolar RNA (snoRNA) U3.

The protein resides in the nucleus. It localises to the nucleolus. It catalyses the reaction a pseudouridine in rRNA + S-adenosyl-L-methionine = an N(1)-methylpseudouridine in rRNA + S-adenosyl-L-homocysteine + H(+). In terms of biological role, S-adenosyl-L-methionine-dependent pseudouridine N(1)-methyltransferase that methylates a pseudouridine in 18S rRNA. Involved the biosynthesis of the hypermodified N1-methyl-N3-(3-amino-3-carboxypropyl) pseudouridine (m1acp3-Psi) conserved in eukaryotic 18S rRNA. Also has an essential role in 40S ribosomal subunit biogenesis independent on its methyltransferase activity, facilitating the incorporation of ribosomal protein S19 during the formation of pre-ribosomes. Functionally, S-adenosyl-L-methionine-dependent pseudouridine N(1)-methyltransferase that methylates pseudouridine at position in 18S rRNA. Involved the biosynthesis of the hypermodified N1-methyl-N3-(3-amino-3-carboxypropyl) pseudouridine (m1acp3-Psi) conserved in eukaryotic 18S rRNA. Is not able to methylate uridine at this position. Also has an essential role in 40S ribosomal subunit biogenesis independent on its methyltransferase activity, facilitating the incorporation of ribosomal protein S19 during the formation of pre-ribosomes. Part of the small subunit (SSU) processome, first precursor of the small eukaryotic ribosomal subunit. During the assembly of the SSU processome in the nucleolus, many ribosome biogenesis factors, an RNA chaperone and ribosomal proteins associate with the nascent pre-rRNA and work in concert to generate RNA folding, modifications, rearrangements and cleavage as well as targeted degradation of pre-ribosomal RNA by the RNA exosome. This Drosophila melanogaster (Fruit fly) protein is Ribosomal RNA small subunit methyltransferase NEP1.